A 427-amino-acid chain; its full sequence is MATHEEFIRTQVFGTVFEITNRYTDLNPVGMGAFGLVCSATDTLAQQPVAIKKIMKPFSTAVLAKRTYRELKLLKHLRHENLICLQDIFLSPLEDIYFVTELQGTDLHRLLQTRPLEKQFVQYFLYQILRGLKYVHSAGVIHRDLKPSNILINENCDLKICDFGLARIQDPQMTGYVSTRYYRAPEIMLTWQKYDVEVDIWSAGCIFAEMTEGKPLFPGKDHVHQFSIITDLLGSPPEDVINTICSENTLKFVTSLPHRDPVPFRERFKTVEPEAVDLLEKMLVFDPKKRITAADALVHPYLAPYHDPTDEPVADAKFDWNFNDADLPVDTWRVMMYSEILDFHKIGGGDGQIDTSATFDDQVAAATAAAAHAAAVAQAQAQAHSNSSNSNSSSNVNSKSKAARDSANDAITNYGNQAVHYANEFQQ.

The region spanning 23–302 (YTDLNPVGMG…AADALVHPYL (280 aa)) is the Protein kinase domain. Residues 29-37 (VGMGAFGLV) and K52 contribute to the ATP site. Catalysis depends on D144, which acts as the Proton acceptor. Residue T174 is modified to Phosphothreonine. A TXY motif is present at residues 174–176 (TGY). Y176 is modified (phosphotyrosine). Positions 380-400 (QAQAHSNSSNSNSSSNVNSKS) are enriched in low complexity. Residues 380–409 (QAQAHSNSSNSNSSSNVNSKSKAARDSAND) form a disordered region.

It belongs to the protein kinase superfamily. Ser/Thr protein kinase family. MAP kinase subfamily. HOG1 sub-subfamily. The cofactor is Mg(2+). In terms of processing, dually phosphorylated on Thr-174 and Tyr-176, which activates the enzyme. Phosphorylated during osmotic stress.

The protein localises to the cytoplasm. It localises to the nucleus. It catalyses the reaction L-seryl-[protein] + ATP = O-phospho-L-seryl-[protein] + ADP + H(+). The catalysed reaction is L-threonyl-[protein] + ATP = O-phospho-L-threonyl-[protein] + ADP + H(+). With respect to regulation, activated by tyrosine and threonine phosphorylation. In terms of biological role, proline-directed serine/threonine-protein kinase involved in a signal transduction pathway that is activated by changes in the osmolarity of the extracellular environment. Controls osmotic regulation of transcription of target genes. Involved in resistance to osmotic stress and tolerance to methylglyoxal and citric acid. The polypeptide is Mitogen-activated protein kinase HOG1 (HOG1) (Torulaspora delbrueckii (Yeast)).